Here is a 225-residue protein sequence, read N- to C-terminus: Phosphatidylserine decarboxylase proenzyme (225 aa).

Serine 195 serves as the catalytic Schiff-base intermediate with substrate; via pyruvic acid. Serine 195 is modified (pyruvic acid (Ser); by autocatalysis).

The protein belongs to the phosphatidylserine decarboxylase family. PSD-A subfamily. Heterodimer of a large membrane-associated beta subunit and a small pyruvoyl-containing alpha subunit. The cofactor is pyruvate. In terms of processing, is synthesized initially as an inactive proenzyme. Formation of the active enzyme involves a self-maturation process in which the active site pyruvoyl group is generated from an internal serine residue via an autocatalytic post-translational modification. Two non-identical subunits are generated from the proenzyme in this reaction, and the pyruvate is formed at the N-terminus of the alpha chain, which is derived from the carboxyl end of the proenzyme. The post-translation cleavage follows an unusual pathway, termed non-hydrolytic serinolysis, in which the side chain hydroxyl group of the serine supplies its oxygen atom to form the C-terminus of the beta chain, while the remainder of the serine residue undergoes an oxidative deamination to produce ammonia and the pyruvoyl prosthetic group on the alpha chain.

The protein resides in the cell membrane. The enzyme catalyses a 1,2-diacyl-sn-glycero-3-phospho-L-serine + H(+) = a 1,2-diacyl-sn-glycero-3-phosphoethanolamine + CO2. It functions in the pathway phospholipid metabolism; phosphatidylethanolamine biosynthesis; phosphatidylethanolamine from CDP-diacylglycerol: step 2/2. In terms of biological role, catalyzes the formation of phosphatidylethanolamine (PtdEtn) from phosphatidylserine (PtdSer). The sequence is that of Phosphatidylserine decarboxylase proenzyme from Gluconacetobacter diazotrophicus (strain ATCC 49037 / DSM 5601 / CCUG 37298 / CIP 103539 / LMG 7603 / PAl5).